Consider the following 324-residue polypeptide: Mating-type protein A-3 (324 aa).

Residues 147–215 (TSRPRNQFVL…RHRAENPHLY (69 aa)) constitute a DNA-binding region (HMG box).

Its subcellular location is the nucleus. Required, together with mating-type protein A-2, for efficient ascospore formation. This is Mating-type protein A-3 (mtA-3) from Neurospora crassa (strain ATCC 24698 / 74-OR23-1A / CBS 708.71 / DSM 1257 / FGSC 987).